Here is a 251-residue protein sequence, read N- to C-terminus: Ferritin-1, chloroplastic (251 aa).

Residues 1-45 (MLLKAAPAFALLNTQGENLSPLFSSSKSFSPKNGNRFVVSASKAT) constitute a chloroplast transit peptide. The tract at residues 46–78 (NHKPLTGVVFEPFEELKKELMLVPAVPDTSLCR) is extension peptide (EP). The region spanning 79–232 (QKYSDDCEAA…EYVAQLRRVG (154 aa)) is the Ferritin-like diiron domain. Fe cation is bound by residues Glu-96, Glu-131, His-134, Glu-180, and Gln-214.

Belongs to the ferritin family. Oligomer of 24 subunits. There are two types of subunits: L (light) chain and H (heavy) chain. The major chain can be light or heavy, depending on the species and tissue type. The functional molecule forms a roughly spherical shell with a diameter of 12 nm and contains a central cavity into which the insoluble mineral iron core is deposited.

The protein localises to the plastid. Its subcellular location is the chloroplast. The enzyme catalyses 4 Fe(2+) + O2 + 4 H(+) = 4 Fe(3+) + 2 H2O. Its function is as follows. Stores iron in a soluble, non-toxic, readily available form. Important for iron homeostasis. Has ferroxidase activity. Iron is taken up in the ferrous form and deposited as ferric hydroxides after oxidation. The polypeptide is Ferritin-1, chloroplastic (FER1) (Nicotiana tabacum (Common tobacco)).